Consider the following 156-residue polypeptide: CASP-like protein 5C1 (156 aa).

The Cytoplasmic segment spans residues 1-24; it reads MENRERAGAGAVGSAGSLGLRVEQ. Residues 25–45 form a helical membrane-spanning segment; that stretch reads AVFSSASLLFMSVGVEFFSYT. Position 46 (A46) is a topological domain, extracellular. A helical membrane pass occupies residues 47–67; it reads FCFLVTIMGLVIPWSCTLAMI. Topologically, residues 68–81 are cytoplasmic; sequence DVYSILVGCPLRVP. A helical transmembrane segment spans residues 82-102; sequence GVMVIVVIGDWVLAILSLAAA. The Extracellular portion of the chain corresponds to 103 to 132; the sequence is SSSAAVIDLLLQFHGSHCSPRFCGRYQLSA. The helical transmembrane segment at 133 to 153 threads the bilayer; sequence MMAFLSWFLTAASSLFNLWFI. The Cytoplasmic portion of the chain corresponds to 154-156; it reads ASR.

The protein belongs to the Casparian strip membrane proteins (CASP) family. In terms of assembly, homodimer and heterodimers.

The protein resides in the cell membrane. This chain is CASP-like protein 5C1, found in Oryza sativa subsp. indica (Rice).